A 133-amino-acid polypeptide reads, in one-letter code: MPNIVEIAVSDERFSTLVTAVTAANLVDVLQSPGPFTVFAPTDTAFAKLPPGTITTLVQNIPQLARILTYHVVAGKFTQADLCRLSTVDSVEGSPIAIDCTEGFEVKNATVIIPDIEADNGIIHVIDNVILMG.

An FAS1 domain is found at 1–130 (MPNIVEIAVS…GIIHVIDNVI (130 aa)).

This is an uncharacterized protein from Synechocystis sp. (strain ATCC 27184 / PCC 6803 / Kazusa).